The primary structure comprises 484 residues: 1,4-beta-D-glucan cellobiohydrolase CEL6A (484 aa).

The first 17 residues, 1–17 (MAKRLLLTAALAATTLA), serve as a signal peptide directing secretion. One can recognise a CBM1 domain in the interval 26–62 (NCGSVWSQCGGQGWTGATCCASGSTCVAQNQWYSQCL). 2 cysteine pairs are disulfide-bonded: cysteine 34–cysteine 51 and cysteine 45–cysteine 61. The tract at residues 68–98 (TTTAQAPSSTRTTTSSSSRPTSSSISTSAVN) is disordered. The substrate site is built by tryptophan 171 and aspartate 173. N-linked (GlcNAc...) asparagine glycosylation is present at asparagine 175. The tract at residues 208–230 (YDLPDRDCAAAASNGEWAIADGG) is substrate binding loop 1. Aspartate 260 functions as the Proton donor in the catalytic mechanism. Histidine 305, tryptophan 308, asparagine 344, tryptophan 405, lysine 433, and glutamate 437 together coordinate substrate. A substrate binding loop 2 region spans residues 431–469 (WIKPGGECDGTSDTTAARYDHHCGFADALKPAPEAGQWF). Residue aspartate 439 is the Proton acceptor of the active site.

This sequence belongs to the glycosyl hydrolase 6 (cellulase B) family. Monomer. Post-translationally, both N- and O-glycosylated.

It is found in the secreted. It carries out the reaction Hydrolysis of (1-&gt;4)-beta-D-glucosidic linkages in cellulose and cellotetraose, releasing cellobiose from the non-reducing ends of the chains.. Exoglucanase that plays an important function in biomass degradation by catalyzing the hydrolysis of the non-reducing end beta-1,4-glucosidic linkages in cellulose and cellotetraose to release cellobiose. Hydrolyzes crystalline and amorphous cellulose but is inactive on hydroxyethyl cellulose, mannan, galactomannan, xyloglucan, arabinoxylan, arabinan, xylan, and pectin. The sequence is that of 1,4-beta-D-glucan cellobiohydrolase CEL6A from Podospora anserina (strain S / ATCC MYA-4624 / DSM 980 / FGSC 10383) (Pleurage anserina).